A 76-amino-acid chain; its full sequence is MLGGLTGWHLLIILAVILLLFGAPKLPALAKSVGQSMRIFKGEVNEMKKDGDKDKGEGGSTAPATDTGASSEQNSK.

The helical transmembrane segment at 1 to 21 threads the bilayer; that stretch reads MLGGLTGWHLLIILAVILLLF. Over residues 44-57 the composition is skewed to basic and acidic residues; the sequence is VNEMKKDGDKDKGE. The segment at 44–76 is disordered; that stretch reads VNEMKKDGDKDKGEGGSTAPATDTGASSEQNSK. Over residues 62-76 the composition is skewed to polar residues; it reads APATDTGASSEQNSK.

This sequence belongs to the TatA/E family. In terms of assembly, the Tat system comprises two distinct complexes: a TatABC complex, containing multiple copies of TatA, TatB and TatC subunits, and a separate TatA complex, containing only TatA subunits. Substrates initially bind to the TatABC complex, which probably triggers association of the separate TatA complex to form the active translocon.

The protein localises to the cell membrane. In terms of biological role, part of the twin-arginine translocation (Tat) system that transports large folded proteins containing a characteristic twin-arginine motif in their signal peptide across membranes. TatA could form the protein-conducting channel of the Tat system. This chain is Sec-independent protein translocase protein TatA, found in Leifsonia xyli subsp. xyli (strain CTCB07).